The following is a 128-amino-acid chain: Large ribosomal subunit protein bL17 (128 aa).

Belongs to the bacterial ribosomal protein bL17 family. As to quaternary structure, part of the 50S ribosomal subunit. Contacts protein L32.

In Streptococcus mutans serotype c (strain ATCC 700610 / UA159), this protein is Large ribosomal subunit protein bL17.